Here is a 448-residue protein sequence, read N- to C-terminus: Adenylosuccinate synthetase (448 aa).

GTP-binding positions include 36–42 (GDEGKGK) and 64–66 (GHT). Asp37 acts as the Proton acceptor in catalysis. The Mg(2+) site is built by Asp37 and Gly64. IMP is bound by residues 37–40 (DEGK), 62–65 (NAGH), Thr154, Arg168, Asn246, Thr261, and Arg325. The active-site Proton donor is the His65. Position 321–327 (321–327 (VTTKRKR)) interacts with substrate. Residues Arg327, 353–355 (KLD), and 436–438 (GVG) contribute to the GTP site.

Belongs to the adenylosuccinate synthetase family. Homodimer. The cofactor is Mg(2+).

It localises to the cytoplasm. The catalysed reaction is IMP + L-aspartate + GTP = N(6)-(1,2-dicarboxyethyl)-AMP + GDP + phosphate + 2 H(+). It functions in the pathway purine metabolism; AMP biosynthesis via de novo pathway; AMP from IMP: step 1/2. Plays an important role in the de novo pathway and in the salvage pathway of purine nucleotide biosynthesis. Catalyzes the first committed step in the biosynthesis of AMP from IMP. The sequence is that of Adenylosuccinate synthetase from Drosophila virilis (Fruit fly).